The sequence spans 361 residues: Probable cadicidin biosynthesis thioesterase (361 aa).

In terms of domain architecture, 4Fe-4S ferredoxin-type spans 2 to 29 (RVTVDSEQCVGAGQCVLNAPEVFDQDDD). Residues 36 to 110 (RADPTSGTTR…RRDSPVTTAD (75 aa)) are disordered. Over residues 46-61 (RSARRATCARRPRSSS) the composition is skewed to basic residues. Basic and acidic residues-rich tracts occupy residues 62–74 (RRTEPAGCADRHR) and 94–104 (TDRRQNHRRDS). Ser-201 is a catalytic residue.

This sequence belongs to the thioesterase family.

It participates in antibiotic biosynthesis; candicidin biosynthesis. Its function is as follows. Probable thioesterase involved in the biosynthesis of candicidin. Could release the macrolide ring from the polyketide synthase. In Streptomyces griseus, this protein is Probable cadicidin biosynthesis thioesterase.